The primary structure comprises 428 residues: 3-phosphoshikimate 1-carboxyvinyltransferase (428 aa).

3-phosphoshikimate contacts are provided by Lys-20, Ser-21, and Arg-25. Residue Lys-20 coordinates phosphoenolpyruvate. 2 residues coordinate phosphoenolpyruvate: Gly-92 and Arg-120. Ser-166, Gln-168, Asp-314, and Lys-341 together coordinate 3-phosphoshikimate. Gln-168 contacts phosphoenolpyruvate. Asp-314 acts as the Proton acceptor in catalysis. Residues Arg-345 and Arg-387 each contribute to the phosphoenolpyruvate site.

It belongs to the EPSP synthase family. As to quaternary structure, monomer.

The protein localises to the cytoplasm. The catalysed reaction is 3-phosphoshikimate + phosphoenolpyruvate = 5-O-(1-carboxyvinyl)-3-phosphoshikimate + phosphate. It functions in the pathway metabolic intermediate biosynthesis; chorismate biosynthesis; chorismate from D-erythrose 4-phosphate and phosphoenolpyruvate: step 6/7. In terms of biological role, catalyzes the transfer of the enolpyruvyl moiety of phosphoenolpyruvate (PEP) to the 5-hydroxyl of shikimate-3-phosphate (S3P) to produce enolpyruvyl shikimate-3-phosphate and inorganic phosphate. The chain is 3-phosphoshikimate 1-carboxyvinyltransferase from Listeria monocytogenes serotype 4b (strain CLIP80459).